The chain runs to 349 residues: Protein-glutamate methylesterase/protein-glutamine glutaminase (349 aa).

The Response regulatory domain maps to 5–122; the sequence is RVLSVDDSAL…REGMLAYSEM (118 aa). Residue Asp-56 is modified to 4-aspartylphosphate. The region spanning 152-344 is the CheB-type methylesterase domain; that stretch reads LLSSEKLIAI…QQMLAKISAG (193 aa). Catalysis depends on residues Ser-164, His-190, and Asp-286.

It belongs to the CheB family. In terms of processing, phosphorylated by CheA. Phosphorylation of the N-terminal regulatory domain activates the methylesterase activity.

It is found in the cytoplasm. It catalyses the reaction [protein]-L-glutamate 5-O-methyl ester + H2O = L-glutamyl-[protein] + methanol + H(+). It carries out the reaction L-glutaminyl-[protein] + H2O = L-glutamyl-[protein] + NH4(+). In terms of biological role, involved in chemotaxis. Part of a chemotaxis signal transduction system that modulates chemotaxis in response to various stimuli. Catalyzes the demethylation of specific methylglutamate residues introduced into the chemoreceptors (methyl-accepting chemotaxis proteins or MCP) by CheR. Also mediates the irreversible deamidation of specific glutamine residues to glutamic acid. The chain is Protein-glutamate methylesterase/protein-glutamine glutaminase from Escherichia coli O6:H1 (strain CFT073 / ATCC 700928 / UPEC).